Here is a 475-residue protein sequence, read N- to C-terminus: Adenosylhomocysteinase (475 aa).

Substrate-binding residues include Thr-63, Asp-138, and Glu-199. Position 200-202 (200-202 (TTT)) interacts with NAD(+). Positions 229 and 233 each coordinate substrate. Residues Asn-234, 263-268 (GYGDVG), Glu-286, Asn-321, 342-344 (IGH), and Asn-389 contribute to the NAD(+) site.

It belongs to the adenosylhomocysteinase family. The cofactor is NAD(+).

The protein resides in the cytoplasm. The catalysed reaction is S-adenosyl-L-homocysteine + H2O = L-homocysteine + adenosine. It participates in amino-acid biosynthesis; L-homocysteine biosynthesis; L-homocysteine from S-adenosyl-L-homocysteine: step 1/1. In terms of biological role, may play a key role in the regulation of the intracellular concentration of adenosylhomocysteine. The sequence is that of Adenosylhomocysteinase from Solibacter usitatus (strain Ellin6076).